The following is a 394-amino-acid chain: MAKEKFERNKPHVNVGTIGHVDHGKTTLTAAISSVLTKTYGGEVKDFAQIDNAPEERERGITINTSHIEYDTPSRHYAHVDCPGHADYVKNMITGAAQMDGAILVVASTDGPMPQTREHILLSRQVGVPFIIVFMNKCDMVDDEELLELVEMEVRELLSEYDFPGDDLPVIQGSALKALEGEPEWEAKILELAEALDTYIPEPERAIDGAFILPIEDVFSISGRGTVVTGRVERGIIKVGEEVEIVGIKDTTKTTCTGVEMFRKLLDEGRAGENCGVLLRGTKREDVERGQVLAAPGSITPHTTFKSEIYVLSKEEGGRHTPFFKGYRPQFYFRTTDVTGTIELPEGVEMVMPGDNVAMTVTLICPIAMDEGLRFAIREGGRTVGAGVVAEIVA.

The 195-residue stretch at 10–204 (KPHVNVGTIG…ALDTYIPEPE (195 aa)) folds into the tr-type G domain. Residues 19-26 (GHVDHGKT) form a G1 region. 19–26 (GHVDHGKT) contributes to the GTP binding site. Position 26 (threonine 26) interacts with Mg(2+). Positions 60-64 (GITIN) are G2. Residues 81–84 (DCPG) form a G3 region. GTP is bound by residues 81 to 85 (DCPGH) and 136 to 139 (NKCD). The G4 stretch occupies residues 136 to 139 (NKCD). Residues 174 to 176 (SAL) form a G5 region.

This sequence belongs to the TRAFAC class translation factor GTPase superfamily. Classic translation factor GTPase family. EF-Tu/EF-1A subfamily. As to quaternary structure, monomer.

Its subcellular location is the cytoplasm. It catalyses the reaction GTP + H2O = GDP + phosphate + H(+). Functionally, GTP hydrolase that promotes the GTP-dependent binding of aminoacyl-tRNA to the A-site of ribosomes during protein biosynthesis. In Shewanella sediminis (strain HAW-EB3), this protein is Elongation factor Tu.